A 146-amino-acid chain; its full sequence is Wheatwin-1 (146 aa).

An N-terminal signal peptide occupies residues 1 to 21 (MAARPMLVVALLCAAAAAATA). Position 22 is a pyrrolidone carboxylic acid (Gln22). One can recognise a Barwin domain in the interval 22-146 (QQATNVRATY…VNYQFVDCRD (125 aa)). Cystine bridges form between Cys52–Cys84, Cys73–Cys107, and Cys87–Cys144.

As to quaternary structure, monomer.

Inhibited by 5'-ADP. Functionally, shows antifungal activity towards B.cinerea and towards the wheat-specific pathogenic fungi F.culmorum and F.graminearum (groups 1 and 2). Has ribonuclease activity. This chain is Wheatwin-1 (PR4A), found in Triticum aestivum (Wheat).